The following is an 87-amino-acid chain: Phytosulfokines 2 (87 aa).

The N-terminal stretch at 1–22 (MANVSALLTIALLLCSTLMCTA) is a signal peptide. Positions 23–77 (RPEPAISISITTAADPCNMEKKIEGKLDDMHMVDENCGADDEDCLMRRTLVAHTD) are excised as a propeptide. Sulfotyrosine occurs at positions 78 and 80. Positions 83–87 (KKKHP) are excised as a propeptide.

Belongs to the phytosulfokine family. Sulfation is important for activity and for the binding to a putative membrane receptor. In terms of processing, PSK-beta is an enzymatic derivative of PSK-alpha. In terms of tissue distribution, expressed in stems, roots and leaves.

It is found in the secreted. Promotes plant cell differentiation, organogenesis and somatic embryogenesis as well as cell proliferation. The sequence is that of Phytosulfokines 2 (PSK2) from Arabidopsis thaliana (Mouse-ear cress).